The primary structure comprises 355 residues: UDP-N-acetylglucosamine--N-acetylmuramyl-(pentapeptide) pyrophosphoryl-undecaprenol N-acetylglucosamine transferase (355 aa).

Residues 15 to 17, Asn127, Arg163, Ser191, Ile244, 263 to 268, and Gln288 contribute to the UDP-N-acetyl-alpha-D-glucosamine site; these read TGG and ALTVSE.

The protein belongs to the glycosyltransferase 28 family. MurG subfamily.

The protein resides in the cell inner membrane. It catalyses the reaction di-trans,octa-cis-undecaprenyl diphospho-N-acetyl-alpha-D-muramoyl-L-alanyl-D-glutamyl-meso-2,6-diaminopimeloyl-D-alanyl-D-alanine + UDP-N-acetyl-alpha-D-glucosamine = di-trans,octa-cis-undecaprenyl diphospho-[N-acetyl-alpha-D-glucosaminyl-(1-&gt;4)]-N-acetyl-alpha-D-muramoyl-L-alanyl-D-glutamyl-meso-2,6-diaminopimeloyl-D-alanyl-D-alanine + UDP + H(+). Its pathway is cell wall biogenesis; peptidoglycan biosynthesis. Its function is as follows. Cell wall formation. Catalyzes the transfer of a GlcNAc subunit on undecaprenyl-pyrophosphoryl-MurNAc-pentapeptide (lipid intermediate I) to form undecaprenyl-pyrophosphoryl-MurNAc-(pentapeptide)GlcNAc (lipid intermediate II). This Salmonella paratyphi B (strain ATCC BAA-1250 / SPB7) protein is UDP-N-acetylglucosamine--N-acetylmuramyl-(pentapeptide) pyrophosphoryl-undecaprenol N-acetylglucosamine transferase.